Here is a 515-residue protein sequence, read N- to C-terminus: Putative ammonium transporter 2 (515 aa).

The next 12 membrane-spanning stretches (helical) occupy residues 34 to 54 (GVWM…FGLL), 72 to 92 (VFDV…LTFG), 124 to 144 (GISY…STIV), 156 to 176 (SHCF…HWVW), 191 to 211 (AGCS…TLYL), 226 to 246 (VSDP…WLAF), 266 to 286 (AVGT…ITRL), 291 to 311 (IQMD…TGGC), 321 to 337 (LVGA…YPVT), 346 to 366 (VGVF…PAIF), 381 to 401 (FQTS…LLFL), and 404 to 424 (FVIL…LFLI).

It belongs to the ammonia transporter channel (TC 1.A.11.2) family.

It is found in the membrane. In terms of biological role, involved in the uptake of ammonia. Implicated in aging. This chain is Putative ammonium transporter 2 (amt-2), found in Caenorhabditis elegans.